A 386-amino-acid chain; its full sequence is DNA replication and repair protein RecF (386 aa).

30-37 (GSNGFGKT) serves as a coordination point for ATP.

Belongs to the RecF family.

The protein resides in the cytoplasm. Functionally, the RecF protein is involved in DNA metabolism; it is required for DNA replication and normal SOS inducibility. RecF binds preferentially to single-stranded, linear DNA. It also seems to bind ATP. In Mycolicibacterium vanbaalenii (strain DSM 7251 / JCM 13017 / BCRC 16820 / KCTC 9966 / NRRL B-24157 / PYR-1) (Mycobacterium vanbaalenii), this protein is DNA replication and repair protein RecF.